Reading from the N-terminus, the 216-residue chain is CASP-like protein 2U1 (216 aa).

Residues 1-30 (MKQDTEMGEATNGYIGTPGTVPVSHAGNDS) form a disordered region. The Cytoplasmic segment spans residues 1-37 (MKQDTEMGEATNGYIGTPGTVPVSHAGNDSGMRRMRT). The helical transmembrane segment at 38 to 58 (ASILMRLTAMALCVTALVTMV) threads the bilayer. The Extracellular segment spans residues 59 to 86 (TDKQTHYFNFASTTIVKTAEYTNVLALK). The chain crosses the membrane as a helical span at residues 87–107 (VFVYTNGVIAGYSLLQALWTI). At 108 to 128 (VAKSSYSTSKARLWTTFFLDQ) the chain is on the cytoplasmic side. A helical transmembrane segment spans residues 129-148 (FIVYVLIGVTGAATEVAYIA). Topologically, residues 149 to 170 (EKGESDVAWPKQCNNFGRFCSQ) are extracellular. A helical membrane pass occupies residues 171-191 (VGASVIVCFVAILTLVFLAVL). Over 192 to 216 (SAKQLFIHERPSRTTRKDGYYTSNQ) the chain is Cytoplasmic.

Belongs to the Casparian strip membrane proteins (CASP) family. Homodimer and heterodimers.

The protein localises to the cell membrane. The polypeptide is CASP-like protein 2U1 (Marchantia polymorpha (Common liverwort)).